We begin with the raw amino-acid sequence, 466 residues long: Adenosylhomocysteinase (466 aa).

T57, D132, and E192 together coordinate substrate. Residue 193–195 (TTT) coordinates NAD(+). The substrate site is built by K222 and D226. NAD(+) contacts are provided by residues N227, 256–261 (GYGDVG), E279, N314, 335–337 (IGH), and N380.

This sequence belongs to the adenosylhomocysteinase family. The cofactor is NAD(+).

It localises to the cytoplasm. It carries out the reaction S-adenosyl-L-homocysteine + H2O = L-homocysteine + adenosine. The protein operates within amino-acid biosynthesis; L-homocysteine biosynthesis; L-homocysteine from S-adenosyl-L-homocysteine: step 1/1. May play a key role in the regulation of the intracellular concentration of adenosylhomocysteine. The sequence is that of Adenosylhomocysteinase from Rhizobium meliloti (strain 1021) (Ensifer meliloti).